The chain runs to 185 residues: Ribosome-recycling factor (185 aa).

This sequence belongs to the RRF family.

It localises to the cytoplasm. Functionally, responsible for the release of ribosomes from messenger RNA at the termination of protein biosynthesis. May increase the efficiency of translation by recycling ribosomes from one round of translation to another. This Citrifermentans bemidjiense (strain ATCC BAA-1014 / DSM 16622 / JCM 12645 / Bem) (Geobacter bemidjiensis) protein is Ribosome-recycling factor.